The sequence spans 179 residues: ATP synthase subunit delta (179 aa).

It belongs to the ATPase delta chain family. F-type ATPases have 2 components, F(1) - the catalytic core - and F(0) - the membrane proton channel. F(1) has five subunits: alpha(3), beta(3), gamma(1), delta(1), epsilon(1). F(0) has three main subunits: a(1), b(2) and c(10-14). The alpha and beta chains form an alternating ring which encloses part of the gamma chain. F(1) is attached to F(0) by a central stalk formed by the gamma and epsilon chains, while a peripheral stalk is formed by the delta and b chains.

It localises to the cell membrane. F(1)F(0) ATP synthase produces ATP from ADP in the presence of a proton or sodium gradient. F-type ATPases consist of two structural domains, F(1) containing the extramembraneous catalytic core and F(0) containing the membrane proton channel, linked together by a central stalk and a peripheral stalk. During catalysis, ATP synthesis in the catalytic domain of F(1) is coupled via a rotary mechanism of the central stalk subunits to proton translocation. In terms of biological role, this protein is part of the stalk that links CF(0) to CF(1). It either transmits conformational changes from CF(0) to CF(1) or is implicated in proton conduction. In Clostridium perfringens (strain SM101 / Type A), this protein is ATP synthase subunit delta.